We begin with the raw amino-acid sequence, 398 residues long: Acetate kinase 1 (398 aa).

Asn9 serves as a coordination point for Mg(2+). Position 16 (Lys16) interacts with ATP. Arg89 provides a ligand contact to substrate. Asp146 acts as the Proton donor/acceptor in catalysis. Residues 206–210 (HLGNG), 281–283 (DCR), and 329–333 (GIGEN) contribute to the ATP site. Glu384 contacts Mg(2+).

The protein belongs to the acetokinase family. In terms of assembly, homodimer. The cofactor is Mg(2+). Requires Mn(2+) as cofactor.

The protein resides in the cytoplasm. The catalysed reaction is acetate + ATP = acetyl phosphate + ADP. Its pathway is metabolic intermediate biosynthesis; acetyl-CoA biosynthesis; acetyl-CoA from acetate: step 1/2. Catalyzes the formation of acetyl phosphate from acetate and ATP. Can also catalyze the reverse reaction. The protein is Acetate kinase 1 of Vibrio cholerae serotype O1 (strain ATCC 39315 / El Tor Inaba N16961).